We begin with the raw amino-acid sequence, 153 residues long: MNARRRLWSVLMLILAVGTAATLTIMALRHNLTYLYMPSEVLRGDTAQQTHFRLGGIVEKGSFQRTSGTLNTRFIVTDGNARLQVRYARILPDLFREGQAIVATGQMQHGTFIAENILARHNETYTPRQLANKMQPTPTQHTHLDTPIAETTP.

The Cytoplasmic segment spans residues 1–6 (MNARRR). Residues 7 to 27 (LWSVLMLILAVGTAATLTIMA) form a helical; Signal-anchor for type II membrane protein membrane-spanning segment. Topologically, residues 28 to 153 (LRHNLTYLYM…LDTPIAETTP (126 aa)) are periplasmic. Positions 121 and 125 each coordinate heme. Positions 131 to 141 (ANKMQPTPTQH) are enriched in polar residues. Residues 131–153 (ANKMQPTPTQHTHLDTPIAETTP) are disordered.

Belongs to the CcmE/CycJ family.

The protein localises to the cell inner membrane. Functionally, heme chaperone required for the biogenesis of c-type cytochromes. Transiently binds heme delivered by CcmC and transfers the heme to apo-cytochromes in a process facilitated by CcmF and CcmH. This chain is Cytochrome c-type biogenesis protein CcmE, found in Xylella fastidiosa (strain Temecula1 / ATCC 700964).